The chain runs to 389 residues: MVGWAGNPSFDLFKLPEEHDEMRSAIRALAEKEIAPHAAEVDEKARFPEEALVALNSSGFNAVHIPEEYGGQGADSVATCIVIEEVARVDASASLIPAVNKLGTMGLILRGSEELKKQVLPALAAEGAMASYALSEREAGSDAASMRTRAKADGDHWILNGAKCWITNGGKSTWYTVMAVTDPDRGANGISAFMVHKDDEGFTVGPKERKLGIKGSPTTELYFENCRIPGDRIIGEPGTGFKTALATLDHTRPTIGAQAVGIAQGALDAAIAYTKDRKQFGESISTFQAVQFMLADMAMKVEAARLMVYSAAARAERGEPDLGFISAASKCFASDVAMEVTTDAVQLFGGAGYTTDFPVERFMRDAKITQIYEGTNQIQRVVMSRALLR.

This sequence belongs to the acyl-CoA dehydrogenase family. Requires FAD as cofactor.

The catalysed reaction is a 2,3-saturated acyl-CoA + A = a 2,3-dehydroacyl-CoA + AH2. In Mycobacterium bovis (strain ATCC BAA-935 / AF2122/97), this protein is Probable acyl-CoA dehydrogenase fadE25 (fadE25).